Here is a 250-residue protein sequence, read N- to C-terminus: Probable xyloglucan-specific endo-beta-1,4-glucanase A (250 aa).

An N-terminal signal peptide occupies residues 1–19; it reads MKLSVLSLASLASAAALNA. An N-linked (GlcNAc...) asparagine glycan is attached at N72.

It belongs to the glycosyl hydrolase 12 (cellulase H) family.

It is found in the secreted. It carries out the reaction xyloglucan + H2O = xyloglucan oligosaccharides.. In terms of biological role, catalyzes endohydrolysis of 1,4-beta-D-glucosidic linkages in xyloglucan with retention of the beta-configuration of the glycosyl residues. Specific for xyloglucan and does not hydrolyze other cell wall components. The sequence is that of Probable xyloglucan-specific endo-beta-1,4-glucanase A (xgeA) from Aspergillus terreus (strain NIH 2624 / FGSC A1156).